A 159-amino-acid chain; its full sequence is Small ribosomal subunit protein uS7m (159 aa).

The protein belongs to the universal ribosomal protein uS7 family. In terms of assembly, part of the small ribosomal subunit.

Its subcellular location is the mitochondrion. Its function is as follows. One of the primary rRNA binding proteins, it binds directly to the small rRNA where it nucleates assembly of the head domain of the small subunit. The protein is Small ribosomal subunit protein uS7m (RPS7) of Reclinomonas americana.